The primary structure comprises 286 residues: 4-hydroxybenzoate octaprenyltransferase (286 aa).

The next 7 helical transmembrane spans lie at 21-40 (GTLLLLWPCLMALVLAAGGM), 96-116 (LFVILGLAAFGLVLLLNGLVV), 142-162 (FLGVVWSWSIPMAYAAQTGEV), 167-187 (WWLFAANWFWTVAYDTMYAMV), 210-230 (QIIGLFQFAALLCFIAAGWSA), 235-255 (LYGLGLLTFVGFSTYQQMLIF), and 266-286 (FLNNNWAGLALFVGLGADYLF).

The protein belongs to the UbiA prenyltransferase family. Mg(2+) is required as a cofactor.

The protein resides in the cell inner membrane. The enzyme catalyses all-trans-octaprenyl diphosphate + 4-hydroxybenzoate = 4-hydroxy-3-(all-trans-octaprenyl)benzoate + diphosphate. Its pathway is cofactor biosynthesis; ubiquinone biosynthesis. Catalyzes the prenylation of para-hydroxybenzoate (PHB) with an all-trans polyprenyl group. Mediates the second step in the final reaction sequence of ubiquinone-8 (UQ-8) biosynthesis, which is the condensation of the polyisoprenoid side chain with PHB, generating the first membrane-bound Q intermediate 3-octaprenyl-4-hydroxybenzoate. This chain is 4-hydroxybenzoate octaprenyltransferase, found in Shewanella sp. (strain MR-4).